Reading from the N-terminus, the 333-residue chain is Ketol-acid reductoisomerase (NADP(+)) (333 aa).

The region spanning 1 to 181 is the KARI N-terminal Rossmann domain; the sequence is MKVYYDQDAD…GGARSGVIET (181 aa). NADP(+) is bound by residues 24 to 27, Arg-47, and 82 to 85; these read YGSQ and DEVQ. His-107 is a catalytic residue. Gly-133 provides a ligand contact to NADP(+). The KARI C-terminal knotted domain occupies 182-327; it reads TFREETETDL…KELRSMMPWL (146 aa). Residues Asp-190, Glu-194, Glu-226, and Glu-230 each contribute to the Mg(2+) site. Ser-251 provides a ligand contact to substrate.

Belongs to the ketol-acid reductoisomerase family. Mg(2+) is required as a cofactor.

The catalysed reaction is (2R)-2,3-dihydroxy-3-methylbutanoate + NADP(+) = (2S)-2-acetolactate + NADPH + H(+). It carries out the reaction (2R,3R)-2,3-dihydroxy-3-methylpentanoate + NADP(+) = (S)-2-ethyl-2-hydroxy-3-oxobutanoate + NADPH + H(+). The protein operates within amino-acid biosynthesis; L-isoleucine biosynthesis; L-isoleucine from 2-oxobutanoate: step 2/4. It functions in the pathway amino-acid biosynthesis; L-valine biosynthesis; L-valine from pyruvate: step 2/4. Involved in the biosynthesis of branched-chain amino acids (BCAA). Catalyzes an alkyl-migration followed by a ketol-acid reduction of (S)-2-acetolactate (S2AL) to yield (R)-2,3-dihydroxy-isovalerate. In the isomerase reaction, S2AL is rearranged via a Mg-dependent methyl migration to produce 3-hydroxy-3-methyl-2-ketobutyrate (HMKB). In the reductase reaction, this 2-ketoacid undergoes a metal-dependent reduction by NADPH to yield (R)-2,3-dihydroxy-isovalerate. This Desulfovibrio desulfuricans (strain ATCC 27774 / DSM 6949 / MB) protein is Ketol-acid reductoisomerase (NADP(+)).